A 248-amino-acid polypeptide reads, in one-letter code: Ubiquinone biosynthesis O-methyltransferase (248 aa).

Positions 41, 72, 93, and 136 each coordinate S-adenosyl-L-methionine.

Belongs to the methyltransferase superfamily. UbiG/COQ3 family.

The catalysed reaction is a 3-demethylubiquinol + S-adenosyl-L-methionine = a ubiquinol + S-adenosyl-L-homocysteine + H(+). It catalyses the reaction a 3-(all-trans-polyprenyl)benzene-1,2-diol + S-adenosyl-L-methionine = a 2-methoxy-6-(all-trans-polyprenyl)phenol + S-adenosyl-L-homocysteine + H(+). It functions in the pathway cofactor biosynthesis; ubiquinone biosynthesis. O-methyltransferase that catalyzes the 2 O-methylation steps in the ubiquinone biosynthetic pathway. The polypeptide is Ubiquinone biosynthesis O-methyltransferase (Brucella anthropi (strain ATCC 49188 / DSM 6882 / CCUG 24695 / JCM 21032 / LMG 3331 / NBRC 15819 / NCTC 12168 / Alc 37) (Ochrobactrum anthropi)).